We begin with the raw amino-acid sequence, 574 residues long: Regulatory protein NPR4 (574 aa).

The interval 1–21 (MAATAIEPSSSISFTSSHLSN) is disordered. Positions 9–20 (SSSISFTSSHLS) are enriched in low complexity. A Phosphoserine modification is found at S11. The BTB domain occupies 54 to 130 (TDAEIIIEEE…IYTGRLKPFP (77 aa)). The C2HC NPR-type zinc finger occupies 133-147 (VSTCVDSVCAHDSCK). The Zn(2+) site is built by C136, C141, H143, and C146. ANK repeat units follow at residues 252–280 (ERTGKVLKALDSDDVELVKLLLTESDITL), 281–311 (DQANGLHYAVAYSDPKVVTQVLDLDMADVNF), and 315–344 (RGYTVLHIAAMRREPTIIIPLIQKGANASD). Residues 373-516 (EPSKYRLCID…MDQYMDEEIP (144 aa)) form a salicylic acid-binding core (SBC) region. A salicylate-binding site is contributed by R419. Residues 521-574 (PEKGTVKERRQKRMRYNELKNDVKKAYSKDKVARSCLSSSSPASSLREALENPT) form a disordered region. The span at 535-553 (RYNELKNDVKKAYSKDKVA) shows a compositional bias: basic and acidic residues. The segment covering 554–567 (RSCLSSSSPASSLR) has biased composition (low complexity).

This sequence belongs to the plant 'ANKYRIN-BTB/POZ' family. 'NPR1-like' subfamily. As to quaternary structure, forms homodimers, homotetramers and heterodimers with NPR3 in the presence of salicylic acid (SA). Interacts with TGA2, TGA3, TGA5, TGA6 and TGA7. Interacts with CUL3A, a core component of the cullin-RING ubiquitin ligases (CRL). Binds to NPR1; this interaction is disrupted by association with SA, probably due to conformational changes.

The protein resides in the nucleus. It participates in protein modification; protein ubiquitination. Functionally, salicylic acid (SA)-binding substrate-specific adapter of an E3 ubiquitin-protein ligase complex (CUL3-RBX1-BTB) which mediates the ubiquitination and subsequent proteasomal degradation of NPR1 in the absence of SA. Together with NPR3, acts as receptor of salicylic acid to monitor immunity in a NPR1-dependent manner and induce systemic acquired resistance (SAR). Involved in the regulation of basal defense responses against pathogens, and may be implicated in the cross-talk between the SA- and JA-dependent signaling pathways. The sequence is that of Regulatory protein NPR4 from Arabidopsis thaliana (Mouse-ear cress).